The chain runs to 25 residues: Antimicrobial peptide 2 (25 aa).

In terms of tissue distribution, expressed by the skin glands.

Its subcellular location is the secreted. In terms of biological role, has very strong antibacterial activity against Gram-positive bacterium S.aureus and very weak activity against Gram-negative bacterium E.coli. The sequence is that of Antimicrobial peptide 2 from Xenopus tropicalis (Western clawed frog).